A 122-amino-acid chain; its full sequence is Small ribosomal subunit protein bS6 (122 aa).

The protein belongs to the bacterial ribosomal protein bS6 family.

Functionally, binds together with bS18 to 16S ribosomal RNA. This Methylibium petroleiphilum (strain ATCC BAA-1232 / LMG 22953 / PM1) protein is Small ribosomal subunit protein bS6.